We begin with the raw amino-acid sequence, 89 residues long: Small ribosomal subunit protein uS15 (89 aa).

The tract at residues 1–23 is disordered; that stretch reads MSLDTTEKQQLINANQTHGTDTG. Over residues 8 to 23 the composition is skewed to polar residues; sequence KQQLINANQTHGTDTG.

Belongs to the universal ribosomal protein uS15 family. In terms of assembly, part of the 30S ribosomal subunit. Forms a bridge to the 50S subunit in the 70S ribosome, contacting the 23S rRNA.

Its function is as follows. One of the primary rRNA binding proteins, it binds directly to 16S rRNA where it helps nucleate assembly of the platform of the 30S subunit by binding and bridging several RNA helices of the 16S rRNA. In terms of biological role, forms an intersubunit bridge (bridge B4) with the 23S rRNA of the 50S subunit in the ribosome. This Prochlorococcus marinus (strain MIT 9313) protein is Small ribosomal subunit protein uS15.